We begin with the raw amino-acid sequence, 142 residues long: Protein KNATM (142 aa).

Residues 4–36 adopt a coiled-coil conformation; it reads KKDENSILENMKQEINHSLKEEAQEEEEILKKR.

In terms of assembly, interacts with KNAT1, KNAT3, KNAT4, BEL1, BLH2, BLH4 and BLH9, but not with BLH8 or the KNATM-A and KNATM-C isoforms. Isoforms KNATM-A and KNATM-C: no interactions with KNATM-B, KNOXX or BELL proteins. As to expression, detected in inflorescences, seedlings, leaves, hydathodes, stems, roots, embryo and siliques. Expressed in a polar pattern in organ primordia and at the boundary of mature organs. Detected in the lateral domains of flower meristems, but not in the inflorescence meristem or the vegetative shoot apical meristem.

The protein localises to the cytoplasm. It is found in the nucleus. Functionally, transcriptional regulator involved in leaf proximal/distal patterning. May act by sequestering BELL transcription factors. This chain is Protein KNATM, found in Arabidopsis thaliana (Mouse-ear cress).